We begin with the raw amino-acid sequence, 366 residues long: Chorismate synthase (366 aa).

The NADP(+) site is built by Arg48 and Arg54. Residues Arg125–Ser127, Asn238–Ala239, Gly278, Lys293–Ser297, and Arg319 contribute to the FMN site.

Belongs to the chorismate synthase family. As to quaternary structure, homotetramer. It depends on FMNH2 as a cofactor.

It carries out the reaction 5-O-(1-carboxyvinyl)-3-phosphoshikimate = chorismate + phosphate. It functions in the pathway metabolic intermediate biosynthesis; chorismate biosynthesis; chorismate from D-erythrose 4-phosphate and phosphoenolpyruvate: step 7/7. In terms of biological role, catalyzes the anti-1,4-elimination of the C-3 phosphate and the C-6 proR hydrogen from 5-enolpyruvylshikimate-3-phosphate (EPSP) to yield chorismate, which is the branch point compound that serves as the starting substrate for the three terminal pathways of aromatic amino acid biosynthesis. This reaction introduces a second double bond into the aromatic ring system. This is Chorismate synthase from Thiobacillus denitrificans (strain ATCC 25259 / T1).